Consider the following 98-residue polypeptide: NADH-ubiquinone oxidoreductase chain 4L (98 aa).

The next 3 membrane-spanning stretches (helical) occupy residues 2 to 22 (SPIYINLMMAFIFSLLGTLLF), 26 to 46 (LMSTLLCLEGMMLSLFIMVTS), and 61 to 81 (ITMLVFGACEAAIGLALLVMI).

Belongs to the complex I subunit 4L family. In terms of assembly, core subunit of respiratory chain NADH dehydrogenase (Complex I) which is composed of 45 different subunits.

The protein localises to the mitochondrion inner membrane. It carries out the reaction a ubiquinone + NADH + 5 H(+)(in) = a ubiquinol + NAD(+) + 4 H(+)(out). Core subunit of the mitochondrial membrane respiratory chain NADH dehydrogenase (Complex I) which catalyzes electron transfer from NADH through the respiratory chain, using ubiquinone as an electron acceptor. Part of the enzyme membrane arm which is embedded in the lipid bilayer and involved in proton translocation. This chain is NADH-ubiquinone oxidoreductase chain 4L (MT-ND4L), found in Nephelomys albigularis (Tomes's rice rat).